Here is a 796-residue protein sequence, read N- to C-terminus: MKALSCLLAVIATAGSLFQHVDARSHARDRLNNISRVERPVIHTPSHRVHAHSHFDLTFDLYPRSSRIKLQLEPNHDVLSHDARVAFLDGEGNVDRMERIERRDHRVFKGWAWVQRKSGSWERVGWARVMMQRDGEDPLFEGVFTVMHDHHQIIPKTKYVHKRHPHDPPLDATPGEYMLLFRGSDIRTQTHDTVERSITSSPSCDADTLAYGTQSDFMFPPLPQENNTNLWGSLMTSIGRRQNSDTVGTVPGSQNLRDTIGNTDGCPNTRRVALIGVVADCTYTSTFASEMDAKTDIISVVNAASVVYEHTFNISLTLGEVNILPKNCPATASSATPFNQMCGERVGDESFTLADRLNTFSAWRGKKSDDFAFWTLMTDCTTENQVGLAWAAQLCVKGVQGDSNTRNASSQAVSGANVVSKTDNTWQVFAHEAGHIFGAVHDCDSALCQDPSNPDNSRCCPSTATTCDAGGKFMMNPTSGSQITAFSPCSVGQICSRMAKHSILTNCLTTNRGVDTISGQQCGNGIVEDGEDCDCGGDESCKGNKCCDPKTCKYTSGSQCDDANEECCRDCKFASSSTICRLSSGPCDPEEKCTGNSGDCPRDTHSKNGETCGTNLQCASGQCTSRDLQCQMHLGSQVAGSRTVAFDSYGCQVACKDPYRPDVRYEGSLTFLDGTPCGGGGTCENGQCTGSTFGNEVSDWVSRHKPIVIGVAVGVGCLLLLAILSCICGRSKKRRPRNRKMAPINMRPMPPVYNGWTGPPPNAESPGGHPQYNHVPPPINAPPPAYPGRMPSTRYA.

An N-terminal signal peptide occupies residues Met1–Ala23. The Extracellular segment spans residues Arg24 to Pro706. Asn33, Asn226, Asn313, and Asn407 each carry an N-linked (GlcNAc...) asparagine glycan. Residues Arg271–Thr510 form the Peptidase M12B domain. Disulfide bonds link Cys395–Cys495, Cys448–Cys459, and Cys580–Cys600. A Zn(2+)-binding site is contributed by His431. Glu432 is a catalytic residue. Zn(2+)-binding residues include His435 and His441. The Disintegrin domain maps to Gly519–Asn608. The chain crosses the membrane as a helical span at residues Ile707 to Ile727. The Cytoplasmic segment spans residues Cys728–Ala796. A disordered region spans residues Arg737–Ala796. Residues Val775–Tyr786 show a composition bias toward pro residues.

It depends on Zn(2+) as a cofactor.

The protein localises to the membrane. Probable zinc protease. This chain is Disintegrin and metalloproteinase domain-containing protein B (ADM-B), found in Arthroderma otae (strain ATCC MYA-4605 / CBS 113480) (Microsporum canis).